A 129-amino-acid chain; its full sequence is Small ribosomal subunit protein uS11 (129 aa).

This sequence belongs to the universal ribosomal protein uS11 family. In terms of assembly, part of the 30S ribosomal subunit. Interacts with proteins S7 and S18. Binds to IF-3.

Located on the platform of the 30S subunit, it bridges several disparate RNA helices of the 16S rRNA. Forms part of the Shine-Dalgarno cleft in the 70S ribosome. The protein is Small ribosomal subunit protein uS11 of Geobacillus stearothermophilus (Bacillus stearothermophilus).